A 344-amino-acid polypeptide reads, in one-letter code: Dihydroorotate dehydrogenase (quinone) (344 aa).

FMN is bound by residues 61–65 and T85; that span reads AGLDK. K65 is a substrate binding site. 110-114 provides a ligand contact to substrate; it reads NRMGF. FMN contacts are provided by N138 and N171. N171 contacts substrate. S174 serves as the catalytic Nucleophile. Residue N176 coordinates substrate. Residues K216 and T244 each coordinate FMN. Substrate is bound at residue 245–246; sequence NT. FMN contacts are provided by residues G267, G296, and 317–318; that span reads YS.

This sequence belongs to the dihydroorotate dehydrogenase family. Type 2 subfamily. Monomer. Requires FMN as cofactor.

The protein localises to the cell membrane. It catalyses the reaction (S)-dihydroorotate + a quinone = orotate + a quinol. Its pathway is pyrimidine metabolism; UMP biosynthesis via de novo pathway; orotate from (S)-dihydroorotate (quinone route): step 1/1. In terms of biological role, catalyzes the conversion of dihydroorotate to orotate with quinone as electron acceptor. The sequence is that of Dihydroorotate dehydrogenase (quinone) from Psychrobacter cryohalolentis (strain ATCC BAA-1226 / DSM 17306 / VKM B-2378 / K5).